Here is a 177-residue protein sequence, read N- to C-terminus: Large ribosomal subunit protein uL6 (177 aa).

The protein belongs to the universal ribosomal protein uL6 family. As to quaternary structure, part of the 50S ribosomal subunit.

This protein binds to the 23S rRNA, and is important in its secondary structure. It is located near the subunit interface in the base of the L7/L12 stalk, and near the tRNA binding site of the peptidyltransferase center. The polypeptide is Large ribosomal subunit protein uL6 (Ectopseudomonas mendocina (strain ymp) (Pseudomonas mendocina)).